A 156-amino-acid polypeptide reads, in one-letter code: Ribosomal RNA large subunit methyltransferase H (156 aa).

S-adenosyl-L-methionine-binding positions include Leu73, Gly104, and 123–128; that span reads LSPLTL.

This sequence belongs to the RNA methyltransferase RlmH family. As to quaternary structure, homodimer.

It is found in the cytoplasm. The catalysed reaction is pseudouridine(1915) in 23S rRNA + S-adenosyl-L-methionine = N(3)-methylpseudouridine(1915) in 23S rRNA + S-adenosyl-L-homocysteine + H(+). Functionally, specifically methylates the pseudouridine at position 1915 (m3Psi1915) in 23S rRNA. In Pectobacterium atrosepticum (strain SCRI 1043 / ATCC BAA-672) (Erwinia carotovora subsp. atroseptica), this protein is Ribosomal RNA large subunit methyltransferase H.